A 180-amino-acid polypeptide reads, in one-letter code: uncharacterized protein (180 aa).

One can recognise an N-acetyltransferase domain in the interval 31–180 (LLVRTAEWLR…HLFEKEITAE (150 aa)).

This sequence belongs to the acetyltransferase family.

This is an uncharacterized protein from Bacillus subtilis (strain 168).